The chain runs to 274 residues: 3-methyl-2-oxobutanoate hydroxymethyltransferase (274 aa).

The Mg(2+) site is built by Asp49 and Asp88. Residues 49 to 50, Asp88, and Lys118 contribute to the 3-methyl-2-oxobutanoate site; that span reads DS. Glu120 provides a ligand contact to Mg(2+). Glu187 functions as the Proton acceptor in the catalytic mechanism.

This sequence belongs to the PanB family. In terms of assembly, homodecamer; pentamer of dimers. Mg(2+) is required as a cofactor.

It localises to the cytoplasm. It carries out the reaction 3-methyl-2-oxobutanoate + (6R)-5,10-methylene-5,6,7,8-tetrahydrofolate + H2O = 2-dehydropantoate + (6S)-5,6,7,8-tetrahydrofolate. It participates in cofactor biosynthesis; (R)-pantothenate biosynthesis; (R)-pantoate from 3-methyl-2-oxobutanoate: step 1/2. Functionally, catalyzes the reversible reaction in which hydroxymethyl group from 5,10-methylenetetrahydrofolate is transferred onto alpha-ketoisovalerate to form ketopantoate. The chain is 3-methyl-2-oxobutanoate hydroxymethyltransferase from Allorhizobium ampelinum (strain ATCC BAA-846 / DSM 112012 / S4) (Agrobacterium vitis (strain S4)).